A 78-amino-acid polypeptide reads, in one-letter code: Putative antitoxin PF1222 (78 aa).

The protein belongs to the UPF0330 family.

In terms of biological role, possibly the antitoxin component of a type II toxin-antitoxin (TA) system. This Pyrococcus furiosus (strain ATCC 43587 / DSM 3638 / JCM 8422 / Vc1) protein is Putative antitoxin PF1222.